We begin with the raw amino-acid sequence, 343 residues long: Phosphate acyltransferase (343 aa).

The protein belongs to the PlsX family. As to quaternary structure, homodimer. Probably interacts with PlsY.

The protein localises to the cytoplasm. It catalyses the reaction a fatty acyl-[ACP] + phosphate = an acyl phosphate + holo-[ACP]. It participates in lipid metabolism; phospholipid metabolism. In terms of biological role, catalyzes the reversible formation of acyl-phosphate (acyl-PO(4)) from acyl-[acyl-carrier-protein] (acyl-ACP). This enzyme utilizes acyl-ACP as fatty acyl donor, but not acyl-CoA. This Acidovorax sp. (strain JS42) protein is Phosphate acyltransferase.